The primary structure comprises 134 residues: Small ribosomal subunit protein uS8 (134 aa).

Belongs to the universal ribosomal protein uS8 family. In terms of assembly, part of the 30S ribosomal subunit. Contacts proteins S5 and S12.

Its function is as follows. One of the primary rRNA binding proteins, it binds directly to 16S rRNA central domain where it helps coordinate assembly of the platform of the 30S subunit. The polypeptide is Small ribosomal subunit protein uS8 (Kosmotoga olearia (strain ATCC BAA-1733 / DSM 21960 / TBF 19.5.1)).